Here is a 238-residue protein sequence, read N- to C-terminus: uncharacterized protein (238 aa).

This is an uncharacterized protein from Acheta domesticus (House cricket).